The following is a 401-amino-acid chain: Nicotinate phosphoribosyltransferase (401 aa).

Residue His-221 is modified to Phosphohistidine; by autocatalysis.

It belongs to the NAPRTase family. Post-translationally, transiently phosphorylated on a His residue during the reaction cycle. Phosphorylation strongly increases the affinity for substrates and increases the rate of nicotinate D-ribonucleotide production. Dephosphorylation regenerates the low-affinity form of the enzyme, leading to product release.

The catalysed reaction is nicotinate + 5-phospho-alpha-D-ribose 1-diphosphate + ATP + H2O = nicotinate beta-D-ribonucleotide + ADP + phosphate + diphosphate. Its pathway is cofactor biosynthesis; NAD(+) biosynthesis; nicotinate D-ribonucleotide from nicotinate: step 1/1. Its function is as follows. Catalyzes the synthesis of beta-nicotinate D-ribonucleotide from nicotinate and 5-phospho-D-ribose 1-phosphate at the expense of ATP. The chain is Nicotinate phosphoribosyltransferase from Pectobacterium atrosepticum (strain SCRI 1043 / ATCC BAA-672) (Erwinia carotovora subsp. atroseptica).